The following is a 539-amino-acid chain: Phosphoenolpyruvate carboxykinase (ATP) (539 aa).

Arg64, Tyr206, and Lys212 together coordinate substrate. Residues Lys212, His231, and 247 to 255 (GLSGTGKTT) each bind ATP. Mn(2+) is bound by residues Lys212 and His231. A Mn(2+)-binding site is contributed by Asp268. ATP is bound by residues Glu296, Arg332, 448 to 449 (RI), and Thr454. Arg332 contributes to the substrate binding site.

It belongs to the phosphoenolpyruvate carboxykinase (ATP) family. In terms of assembly, monomer. It depends on Mn(2+) as a cofactor.

The protein localises to the cytoplasm. The catalysed reaction is oxaloacetate + ATP = phosphoenolpyruvate + ADP + CO2. Its pathway is carbohydrate biosynthesis; gluconeogenesis. Functionally, involved in the gluconeogenesis. Catalyzes the conversion of oxaloacetate (OAA) to phosphoenolpyruvate (PEP) through direct phosphoryl transfer between the nucleoside triphosphate and OAA. This Salmonella arizonae (strain ATCC BAA-731 / CDC346-86 / RSK2980) protein is Phosphoenolpyruvate carboxykinase (ATP).